The chain runs to 564 residues: Arginine--tRNA ligase (564 aa).

Positions 122-132 (PNIAKPFSIGH) match the 'HIGH' region motif.

This sequence belongs to the class-I aminoacyl-tRNA synthetase family. As to quaternary structure, monomer.

It is found in the cytoplasm. It catalyses the reaction tRNA(Arg) + L-arginine + ATP = L-arginyl-tRNA(Arg) + AMP + diphosphate. This chain is Arginine--tRNA ligase, found in Lactococcus lactis subsp. cremoris (strain SK11).